The sequence spans 171 residues: MSNANSFTKEDLIACGLGKLFGPNSPRLPKDNMLMIDRVLKINGDGGEYGKGEIVAELDINPELWFFDCHFAGDPVMPGCLGLDAMWQLVGFFLGWEGAEGKGRALGVGEVKFTGQVLPEAKKVTYKLTIKRKVYRKLVMGIADATMEVDGREIYSAKDLKVGIFTDTTSF.

Histidine 70 is a catalytic residue.

It belongs to the thioester dehydratase family. FabA subfamily. As to quaternary structure, homodimer.

It localises to the cytoplasm. It catalyses the reaction a (3R)-hydroxyacyl-[ACP] = a (2E)-enoyl-[ACP] + H2O. The enzyme catalyses (3R)-hydroxydecanoyl-[ACP] = (2E)-decenoyl-[ACP] + H2O. It carries out the reaction (2E)-decenoyl-[ACP] = (3Z)-decenoyl-[ACP]. It functions in the pathway lipid metabolism; fatty acid biosynthesis. Functionally, necessary for the introduction of cis unsaturation into fatty acids. Catalyzes the dehydration of (3R)-3-hydroxydecanoyl-ACP to E-(2)-decenoyl-ACP and then its isomerization to Z-(3)-decenoyl-ACP. Can catalyze the dehydratase reaction for beta-hydroxyacyl-ACPs with saturated chain lengths up to 16:0, being most active on intermediate chain length. The sequence is that of 3-hydroxydecanoyl-[acyl-carrier-protein] dehydratase from Shewanella halifaxensis (strain HAW-EB4).